The primary structure comprises 715 residues: Fatty acid oxidation complex subunit alpha (715 aa).

The segment at 1-190 is enoyl-CoA hydratase; the sequence is MTTTSAFMLN…KAGLVDDVVP (190 aa). Residues 306-715 are 3-hydroxyacyl-CoA dehydrogenase; sequence GPLNSVGILG…WTNGETDQGN (410 aa).

It in the N-terminal section; belongs to the enoyl-CoA hydratase/isomerase family. In the central section; belongs to the 3-hydroxyacyl-CoA dehydrogenase family. In terms of assembly, heterotetramer of two alpha chains (FadJ) and two beta chains (FadI).

The protein resides in the cytoplasm. It catalyses the reaction a (3S)-3-hydroxyacyl-CoA = a (2E)-enoyl-CoA + H2O. The catalysed reaction is a 4-saturated-(3S)-3-hydroxyacyl-CoA = a (3E)-enoyl-CoA + H2O. It carries out the reaction a (3S)-3-hydroxyacyl-CoA + NAD(+) = a 3-oxoacyl-CoA + NADH + H(+). The enzyme catalyses (3S)-3-hydroxybutanoyl-CoA = (3R)-3-hydroxybutanoyl-CoA. Its pathway is lipid metabolism; fatty acid beta-oxidation. Functionally, catalyzes the formation of a hydroxyacyl-CoA by addition of water on enoyl-CoA. Also exhibits 3-hydroxyacyl-CoA epimerase and 3-hydroxyacyl-CoA dehydrogenase activities. The protein is Fatty acid oxidation complex subunit alpha of Salmonella paratyphi B (strain ATCC BAA-1250 / SPB7).